The primary structure comprises 146 residues: Acidic phospholipase A2 CM-II (146 aa).

A signal peptide spans 1–21 (MNPAHLLILAAVCVSPLGAFS). Positions 22-27 (NRPMPL) are excised as a propeptide. Cystine bridges form between Cys-38–Cys-98, Cys-53–Cys-145, Cys-55–Cys-71, Cys-70–Cys-126, Cys-77–Cys-119, Cys-87–Cys-112, and Cys-105–Cys-117. Residues Tyr-54, Gly-56, and Gly-58 each coordinate Ca(2+). His-74 is an active-site residue. Asp-75 is a Ca(2+) binding site. Residue Asp-120 is part of the active site.

This sequence belongs to the phospholipase A2 family. Group I subfamily. D49 sub-subfamily. The cofactor is Ca(2+). In terms of tissue distribution, expressed by the venom gland.

Its subcellular location is the secreted. It carries out the reaction a 1,2-diacyl-sn-glycero-3-phosphocholine + H2O = a 1-acyl-sn-glycero-3-phosphocholine + a fatty acid + H(+). Its function is as follows. PLA2 catalyzes the calcium-dependent hydrolysis of the 2-acyl groups in 3-sn-phosphoglycerides. Is able to suppress the acetylcholine (ACh)-evoked current mediated by alpha-7 (CHRNA7)-similar nAChRs in L.stagnalis neurons (IC(50)=37 nM) and to compete with alpha-bungarotoxin for binding to muscle- and alpha-7 neuronal nAChR types, as well as to AChBPs. In inhibition of alpha-bungarotoxin binding, this toxin is similarly active against T.californica nAChR (IC(50)=1.2 uM), human alpha-7 nAChR (IC(50)=3.2 uM), and L.stagnalis AChBP (IC(50)=1.0 uM), whereas it is not active against A.californica AChBP (IC(50)&gt;100 uM). This Naja kaouthia (Monocled cobra) protein is Acidic phospholipase A2 CM-II.